The sequence spans 368 residues: Putative transport protein bbp_117 (368 aa).

The next 8 membrane-spanning stretches (helical) occupy residues 13–35 (VIFSLVFIFIMIISSLWIMRPFF), 39–61 (AWASMVVVATWPIFLKLQILLWG), 68–90 (VMMTFSLLLVFIIPIVCLVNSLI), 159–181 (HFGRFILHLIFMLIFSALLYWNG), 216–238 (LGVVVTALVQGILSGIGLAISGI), 248–270 (IIIFCLVQLGPLPVLIPAIIWLY), 277–299 (WGTVLLIWSCVVCILDHILRPIL), and 314–336 (GVIGGLIAFGMIGLFIGPVVLII).

It belongs to the autoinducer-2 exporter (AI-2E) (TC 2.A.86) family.

It localises to the cell membrane. The sequence is that of Putative transport protein bbp_117 from Buchnera aphidicola subsp. Baizongia pistaciae (strain Bp).